The sequence spans 322 residues: Acetyl-coenzyme A carboxylase carboxyl transferase subunit alpha (322 aa).

Residues 40–297 (PLQKKLGDLR…RETLTRNLEE (258 aa)) form the CoA carboxyltransferase C-terminal domain.

The protein belongs to the AccA family. As to quaternary structure, acetyl-CoA carboxylase is a heterohexamer composed of biotin carboxyl carrier protein (AccB), biotin carboxylase (AccC) and two subunits each of ACCase subunit alpha (AccA) and ACCase subunit beta (AccD).

The protein resides in the cytoplasm. It catalyses the reaction N(6)-carboxybiotinyl-L-lysyl-[protein] + acetyl-CoA = N(6)-biotinyl-L-lysyl-[protein] + malonyl-CoA. Its pathway is lipid metabolism; malonyl-CoA biosynthesis; malonyl-CoA from acetyl-CoA: step 1/1. Component of the acetyl coenzyme A carboxylase (ACC) complex. First, biotin carboxylase catalyzes the carboxylation of biotin on its carrier protein (BCCP) and then the CO(2) group is transferred by the carboxyltransferase to acetyl-CoA to form malonyl-CoA. This is Acetyl-coenzyme A carboxylase carboxyl transferase subunit alpha from Gemmatimonas aurantiaca (strain DSM 14586 / JCM 11422 / NBRC 100505 / T-27).